The following is a 354-amino-acid chain: Uroporphyrinogen decarboxylase (354 aa).

Substrate-binding positions include 27–31 (RQAGR), aspartate 77, tyrosine 154, threonine 209, and histidine 327.

The protein belongs to the uroporphyrinogen decarboxylase family. As to quaternary structure, homodimer.

Its subcellular location is the cytoplasm. It catalyses the reaction uroporphyrinogen III + 4 H(+) = coproporphyrinogen III + 4 CO2. The protein operates within porphyrin-containing compound metabolism; protoporphyrin-IX biosynthesis; coproporphyrinogen-III from 5-aminolevulinate: step 4/4. Catalyzes the decarboxylation of four acetate groups of uroporphyrinogen-III to yield coproporphyrinogen-III. The sequence is that of Uroporphyrinogen decarboxylase from Edwardsiella ictaluri (strain 93-146).